The primary structure comprises 332 residues: Ferredoxin--NADP reductase 2 (332 aa).

Residues E37, Q45, Y50, V90, F124, D285, and T326 each contribute to the FAD site.

Belongs to the ferredoxin--NADP reductase type 2 family. As to quaternary structure, homodimer. FAD is required as a cofactor.

The enzyme catalyses 2 reduced [2Fe-2S]-[ferredoxin] + NADP(+) + H(+) = 2 oxidized [2Fe-2S]-[ferredoxin] + NADPH. The chain is Ferredoxin--NADP reductase 2 from Bacillus pumilus (strain SAFR-032).